A 428-amino-acid chain; its full sequence is MSSTVVVGSQWGDEGKGKITDFLSEKADVIARYQGGDNAGHTIVFNGQTFKLRLIPSGIFYADKTSVIGNGVVLNPQSLIEELTYLHDNGVATDNLRISDRAHVILPYHILLDQAQEKAKASKIGTTNKGIGPAYMDKAERIGIRVADLLDHDIFAEKLHQNLIEKNKVLTKLYDEEPLNYDDIFETYYALGQQLKGYVTDTSVVINDALDAGKNVLFEGAQGVMLDIDHGTYPFVTSSNPVAGGVTIGSGVGPTKIDHVVGVCKAYTSRVGDGPFPTELFDEIGDTIRETGHEYGTVTKRPRRIGWFDSVVLRHAKRVSGLTTLSLNCLDVLTGLKTVKICKAYQLNGETIYHYPASLVDLDACQPVYEELPGWDEDITHCRSVAELPANAQTYVKRLAELVGVEIATLSVGPDREQTNILQDVWNA.

Residues 12–18 (GDEGKGK) and 40–42 (GHT) each bind GTP. Aspartate 13 (proton acceptor) is an active-site residue. Mg(2+)-binding residues include aspartate 13 and glycine 40. IMP is bound by residues 13–16 (DEGK), 38–41 (NAGH), threonine 127, arginine 141, glutamine 222, threonine 237, and arginine 301. The Proton donor role is filled by histidine 41. A substrate-binding site is contributed by 297-303 (TVTKRPR). Residues arginine 303, 329-331 (CLD), and 411-413 (SVG) contribute to the GTP site.

It belongs to the adenylosuccinate synthetase family. Homodimer. Mg(2+) is required as a cofactor.

The protein resides in the cytoplasm. It catalyses the reaction IMP + L-aspartate + GTP = N(6)-(1,2-dicarboxyethyl)-AMP + GDP + phosphate + 2 H(+). It participates in purine metabolism; AMP biosynthesis via de novo pathway; AMP from IMP: step 1/2. Plays an important role in the de novo pathway of purine nucleotide biosynthesis. Catalyzes the first committed step in the biosynthesis of AMP from IMP. The sequence is that of Adenylosuccinate synthetase from Levilactobacillus brevis (strain ATCC 367 / BCRC 12310 / CIP 105137 / JCM 1170 / LMG 11437 / NCIMB 947 / NCTC 947) (Lactobacillus brevis).